We begin with the raw amino-acid sequence, 169 residues long: Major fimbrial subunit SMF-1 (169 aa).

The first 11 residues, 1-11, serve as a signal peptide directing secretion; the sequence is MLAAAPLAANA.

This sequence belongs to the fimbrial protein family.

It localises to the fimbrium. In terms of biological role, involved in adherence to eukaryotic epithelial cells and abiotic surfaces. Mediates agglutination of animal red blood cells. The protein is Major fimbrial subunit SMF-1 of Stenotrophomonas maltophilia (strain K279a).